The following is a 102-amino-acid chain: Antitoxin VapB46 (102 aa).

Belongs to the phD/YefM antitoxin family.

Its function is as follows. Antitoxin component of a type II toxin-antitoxin (TA) system. Neutralizes the effect of cognate toxin VapC46. This is Antitoxin VapB46 (vapB46) from Mycobacterium tuberculosis (strain CDC 1551 / Oshkosh).